The primary structure comprises 520 residues: Peptide chain release factor 3 (520 aa).

Positions 8–273 constitute a tr-type G domain; the sequence is EIRKTFAIIS…AYVDHAPMPS (266 aa). GTP-binding positions include 17-24, 85-89, and 139-142; these read SHPDAGKT, DTPGH, and NKLD.

This sequence belongs to the TRAFAC class translation factor GTPase superfamily. Classic translation factor GTPase family. PrfC subfamily.

The protein resides in the cytoplasm. Increases the formation of ribosomal termination complexes and stimulates activities of RF-1 and RF-2. It binds guanine nucleotides and has strong preference for UGA stop codons. It may interact directly with the ribosome. The stimulation of RF-1 and RF-2 is significantly reduced by GTP and GDP, but not by GMP. The polypeptide is Peptide chain release factor 3 (Macrococcus caseolyticus (strain JCSC5402) (Macrococcoides caseolyticum)).